The following is a 406-amino-acid chain: Cysteine desulfurase IscS (406 aa).

Residues A75 to T76, N155, Q183, and S203 to H205 each bind pyridoxal 5'-phosphate. At K206 the chain carries N6-(pyridoxal phosphate)lysine. T243 contributes to the pyridoxal 5'-phosphate binding site. The active-site Cysteine persulfide intermediate is C330. [2Fe-2S] cluster is bound at residue C330.

This sequence belongs to the class-V pyridoxal-phosphate-dependent aminotransferase family. NifS/IscS subfamily. Homodimer. Forms a heterotetramer with IscU, interacts with other sulfur acceptors. It depends on pyridoxal 5'-phosphate as a cofactor.

Its subcellular location is the cytoplasm. It carries out the reaction (sulfur carrier)-H + L-cysteine = (sulfur carrier)-SH + L-alanine. Its pathway is cofactor biosynthesis; iron-sulfur cluster biosynthesis. In terms of biological role, master enzyme that delivers sulfur to a number of partners involved in Fe-S cluster assembly, tRNA modification or cofactor biosynthesis. Catalyzes the removal of elemental sulfur atoms from cysteine to produce alanine. Functions as a sulfur delivery protein for Fe-S cluster synthesis onto IscU, an Fe-S scaffold assembly protein, as well as other S acceptor proteins. The sequence is that of Cysteine desulfurase IscS from Haemophilus ducreyi (strain 35000HP / ATCC 700724).